A 432-amino-acid polypeptide reads, in one-letter code: T-box transcription factor T (432 aa).

The T-box DNA-binding region spans 49–217 (LWTRFKELTN…HNPFAKAFLD (169 aa)). The tract at residues 274 to 306 (CERYSSLRNHRSAPYPSPYTHRNNSPNNLADNS) is disordered. Residues 293–306 (THRNNSPNNLADNS) show a composition bias toward polar residues.

As to quaternary structure, when not bound to DNA, exists as a monomer. Binds DNA as a dimer. As to expression, expressed in presumptive mesodermal cells around the blastopore, and then in the notochord.

The protein resides in the nucleus. Involved in the transcriptional regulation of genes required for mesoderm formation and differentiation. Binds to the palindromic T site 5'-TTCACACCTAGGTGTGAA-3' DNA sequence. Causes dorsal mesodermal differentiation of animal cap ectoderm when co-expressed with wnt8 and noggin. None of these molecules causes dorsal mesoderm formation when expressed alone. Establishes the left/right axis at early gastrula stage by directly up-regulating mesodermal expression of zic3. In Xenopus laevis (African clawed frog), this protein is T-box transcription factor T.